The sequence spans 123 residues: Large ribosomal subunit protein uL18 (123 aa).

Belongs to the universal ribosomal protein uL18 family. As to quaternary structure, part of the 50S ribosomal subunit; part of the 5S rRNA/L5/L18/L25 subcomplex. Contacts the 5S and 23S rRNAs.

This is one of the proteins that bind and probably mediate the attachment of the 5S RNA into the large ribosomal subunit, where it forms part of the central protuberance. This chain is Large ribosomal subunit protein uL18, found in Wolbachia pipientis subsp. Culex pipiens (strain wPip).